Here is a 549-residue protein sequence, read N- to C-terminus: Threonine--tRNA ligase catalytic subunit (549 aa).

Residues aspartate 142–proline 437 form a catalytic region. Zn(2+)-binding residues include cysteine 235, histidine 286, and histidine 414.

The protein belongs to the class-II aminoacyl-tRNA synthetase family. Homodimer. Probably interacts with its editing subunit. It depends on Zn(2+) as a cofactor.

It is found in the cytoplasm. The enzyme catalyses tRNA(Thr) + L-threonine + ATP = L-threonyl-tRNA(Thr) + AMP + diphosphate + H(+). Functionally, catalyzes the attachment of threonine to tRNA(Thr) in a two-step reaction: L-threonine is first activated by ATP to form Thr-AMP and then transferred to the acceptor end of tRNA(Thr). Also activates L-serine and transfers it to tRNA(Thr) but cannot deacylate incorrectly charged amino acid; unlike most archaea the editing function is found in a freestanding protein. This chain is Threonine--tRNA ligase catalytic subunit, found in Sulfolobus acidocaldarius (strain ATCC 33909 / DSM 639 / JCM 8929 / NBRC 15157 / NCIMB 11770).